A 495-amino-acid polypeptide reads, in one-letter code: Glutamyl-tRNA(Gln) amidotransferase subunit A (495 aa).

Residues K75 and S150 each act as charge relay system in the active site. The active-site Acyl-ester intermediate is the S174.

Belongs to the amidase family. GatA subfamily. In terms of assembly, heterotrimer of A, B and C subunits.

It carries out the reaction L-glutamyl-tRNA(Gln) + L-glutamine + ATP + H2O = L-glutaminyl-tRNA(Gln) + L-glutamate + ADP + phosphate + H(+). In terms of biological role, allows the formation of correctly charged Gln-tRNA(Gln) through the transamidation of misacylated Glu-tRNA(Gln) in organisms which lack glutaminyl-tRNA synthetase. The reaction takes place in the presence of glutamine and ATP through an activated gamma-phospho-Glu-tRNA(Gln). The chain is Glutamyl-tRNA(Gln) amidotransferase subunit A from Paraburkholderia phytofirmans (strain DSM 17436 / LMG 22146 / PsJN) (Burkholderia phytofirmans).